Reading from the N-terminus, the 551-residue chain is Glucose-6-phosphate isomerase 2 (551 aa).

The active-site Proton donor is the Glu-359. Residues His-390 and Lys-514 contribute to the active site.

It belongs to the GPI family.

It is found in the cytoplasm. The catalysed reaction is alpha-D-glucose 6-phosphate = beta-D-fructose 6-phosphate. It functions in the pathway carbohydrate biosynthesis; gluconeogenesis. Its pathway is carbohydrate degradation; glycolysis; D-glyceraldehyde 3-phosphate and glycerone phosphate from D-glucose: step 2/4. Its function is as follows. Catalyzes the reversible isomerization of glucose-6-phosphate to fructose-6-phosphate. This is Glucose-6-phosphate isomerase 2 from Streptomyces coelicolor (strain ATCC BAA-471 / A3(2) / M145).